We begin with the raw amino-acid sequence, 520 residues long: Cytochrome P450 monooxygenase btcC (520 aa).

Residues 2–22 (IFLLTLAGLKVLSIVILFGII) form a helical membrane-spanning segment. Asn-177 is a glycosylation site (N-linked (GlcNAc...) asparagine). Cys-448 is a binding site for heme. Asn-511 carries an N-linked (GlcNAc...) asparagine glycan.

It belongs to the cytochrome P450 family. Heme is required as a cofactor.

Its subcellular location is the membrane. It participates in secondary metabolite biosynthesis; terpenoid biosynthesis. Cytochrome P4590 monooxygenase part of the gene cluster that mediates the biosynthesis of betaestacins. The bifunctional terpene synthase btcA converts isopentenyl diphosphate (IPP) and dimethylallyl diphosphate (DMAPP) into the sesterterpene betaestacin I. The C-terminal prenyltransferase (PT) domain of btcA catalyzes formation of GFPP, whereas the N-terminal terpene cyclase (TC) domain catalyzes the cyclization of GFPP into betaestacin I. The cytochrome P450 monooxygenase btcB oxidizes the C25 methyl group of betaestacin I to yield the carboxylic acid betaestacin IV via the alcohol betaestacin III. The cytochrome P450 monooxygenase btcC further catalyzes the multistep oxidation of betaestacin IV to produce several compounds, including betaestacins Va, Vb, Vc and VI. This is Cytochrome P450 monooxygenase btcC from Colletotrichum orbiculare (strain 104-T / ATCC 96160 / CBS 514.97 / LARS 414 / MAFF 240422) (Cucumber anthracnose fungus).